The primary structure comprises 81 residues: Photosystem I iron-sulfur center (81 aa).

4Fe-4S ferredoxin-type domains are found at residues 2–31 and 37–68; these read SHSV…MVPW and GQIA…VRVY. Cysteine 11, cysteine 14, cysteine 17, cysteine 21, cysteine 48, cysteine 51, cysteine 54, and cysteine 58 together coordinate [4Fe-4S] cluster.

As to quaternary structure, the cyanobacterial PSI reaction center is composed of one copy each of PsaA,B,C,D,E,F,I,J,K,L,M and X, and forms trimeric complexes. [4Fe-4S] cluster serves as cofactor.

It is found in the cellular thylakoid membrane. The catalysed reaction is reduced [plastocyanin] + hnu + oxidized [2Fe-2S]-[ferredoxin] = oxidized [plastocyanin] + reduced [2Fe-2S]-[ferredoxin]. Its function is as follows. Apoprotein for the two 4Fe-4S centers FA and FB of photosystem I (PSI); essential for photochemical activity. FB is the terminal electron acceptor of PSI, donating electrons to ferredoxin. The C-terminus interacts with PsaA/B/D and helps assemble the protein into the PSI complex. Required for binding of PsaD and PsaE to PSI. PSI is a plastocyanin/cytochrome c6-ferredoxin oxidoreductase, converting photonic excitation into a charge separation, which transfers an electron from the donor P700 chlorophyll pair to the spectroscopically characterized acceptors A0, A1, FX, FA and FB in turn. This Prochlorococcus marinus (strain SARG / CCMP1375 / SS120) protein is Photosystem I iron-sulfur center.